We begin with the raw amino-acid sequence, 1529 residues long: Protein STU1 (1529 aa).

Disordered regions lie at residues 266-314 (SMGR…DEQI), 617-638 (KPRTITSRNQPSTLSSLTARKA), 651-745 (KELR…SQGI), and 1070-1090 (SANDTGFRTPPKLAGNHTSPI). Positions 273–290 (TISSNSSTPASLSSSTMS) are enriched in low complexity. 2 stretches are compositionally biased toward polar residues: residues 295-308 (RTNFHNYTKSISPS) and 619-634 (RTITSRNQPSTLSSLT). Over residues 660 to 674 (TSISRPSSRINSTSS) the composition is skewed to low complexity. The span at 708-723 (TPSTSSLSRVESNQDA) shows a compositional bias: polar residues.

Belongs to the CLASP family. In terms of assembly, interacts with microtubules.

It localises to the cytoplasm. The protein resides in the cytoskeleton. Its subcellular location is the nucleus. The protein localises to the spindle. In terms of biological role, microtubule binding protein that promotes the stabilization of dynamic microtubules. Required for mitotic spindle formation. The sequence is that of Protein STU1 (STU1) from Debaryomyces hansenii (strain ATCC 36239 / CBS 767 / BCRC 21394 / JCM 1990 / NBRC 0083 / IGC 2968) (Yeast).